Consider the following 212-residue polypeptide: Large ribosomal subunit protein uL3 (212 aa).

Residue Gln-153 is modified to N5-methylglutamine.

Belongs to the universal ribosomal protein uL3 family. In terms of assembly, part of the 50S ribosomal subunit. Forms a cluster with proteins L14 and L19. In terms of processing, methylated by PrmB.

Its function is as follows. One of the primary rRNA binding proteins, it binds directly near the 3'-end of the 23S rRNA, where it nucleates assembly of the 50S subunit. The polypeptide is Large ribosomal subunit protein uL3 (Idiomarina loihiensis (strain ATCC BAA-735 / DSM 15497 / L2-TR)).